A 516-amino-acid polypeptide reads, in one-letter code: tRNA-2-methylthio-N(6)-dimethylallyladenosine synthase (516 aa).

The MTTase N-terminal domain maps to 17-133 (RSFEVRTFGC…LPSLLSRSEH (117 aa)). [4Fe-4S] cluster-binding residues include Cys-26, Cys-62, Cys-96, Cys-170, Cys-174, and Cys-177. A Radical SAM core domain is found at 156–392 (RESAYAGWVS…LALQERISTE (237 aa)). A TRAM domain is found at 395 to 466 (AKLIGTEVEL…PFFLIADSGV (72 aa)). 2 disordered regions span residues 409-438 (SGGR…QGHV) and 492-516 (GLGL…GCGC). A compositionally biased stretch (basic and acidic residues) spans 412–438 (RKNDKTQRMTGRSRDGRLVHFDPQGHV).

This sequence belongs to the methylthiotransferase family. MiaB subfamily. As to quaternary structure, monomer. [4Fe-4S] cluster serves as cofactor.

It localises to the cytoplasm. The enzyme catalyses N(6)-dimethylallyladenosine(37) in tRNA + (sulfur carrier)-SH + AH2 + 2 S-adenosyl-L-methionine = 2-methylsulfanyl-N(6)-dimethylallyladenosine(37) in tRNA + (sulfur carrier)-H + 5'-deoxyadenosine + L-methionine + A + S-adenosyl-L-homocysteine + 2 H(+). In terms of biological role, catalyzes the methylthiolation of N6-(dimethylallyl)adenosine (i(6)A), leading to the formation of 2-methylthio-N6-(dimethylallyl)adenosine (ms(2)i(6)A) at position 37 in tRNAs that read codons beginning with uridine. The sequence is that of tRNA-2-methylthio-N(6)-dimethylallyladenosine synthase from Corynebacterium diphtheriae (strain ATCC 700971 / NCTC 13129 / Biotype gravis).